Reading from the N-terminus, the 1013-residue chain is MCSQEAFQAQRSQLVGLLVSGSLEGFESILDLLLSWEVLSWEDYEGLRLVGQPLSHLARRLLDTVWNKGTWGCQKLIAAVQEAQDSSQCPELHGCWDPHSLHPAQDLQSHRPAIVRRLYSHVEGVLDLALEQGFISQYECDEIRLPIFTSSQRARRLLDLATVKANGLAAFLLQHVQKLPVSLSLPFEAAACKKYMSKLRTIVAAQSRFLSTYDGAENLCLEDIYTENTLEVRTEVGMAGPLHKSPAALGLEELFSPNGHLNEDADTVLVVGEAGSGKSTLLQQVHLLWATGQDFQEFLFVFPFSCRQLQCVARPLSVMTLLFEHCCWPDVGQQDVFQFLLDHPDRILLTFDGFDEFKFKFTDHERHCSPTDPTSVQTLLFNLLQGNLLKNARKVLTSRPDAVSAFLRKYVRTEFNLKGFSEEGIELYLRKCHREPGVADRLIHLLQTTSALHGLCHLPVFSWMVSKCHQELLLQDGGSPKTTTDMYLLILQHFLRHASLPDSASQGLGPSLLQGRLPTLLRLGQLALWGLGMCCYVFSAQQLQAAQVDPDDISLGFLVQAQGVVPGSTAPLEFLHITFQCFLAAFYLVLSTDVPTASLRYLFNCRRPGSSPLSRLLPRLCVQGSEHKESTVAALLQKTEPHNLQITAAFLAGLLSREHRDLLAACQASERSLLRRRACARWCLARSLHKHFRSIPPAVPGEAKSMHAMPGFLWLIRSLYEMQEERLAQEAVRGLNVEHLKLTFCGVGPAECAALAFVLRHLRRPVALQLDHNSVGDIGVEQLLPCLGACKALYLRDNNISDRGICKLIEHALHCEQLQKLALFNNKLTDGCAHSVAQLLACKQNFLALRLGNNHITAEGAQVLAEGLRDNSSLQFLGFWGNKVGDKGAQALAEALSDHQSLKWLSLVGNNIGSVGAQALASMLEKNVALEELCLEENHLQDAGVCSLAEGLKRNSSLKVLKLSNNCITFVGAEALLQALASNDTILEVWLRGNPFSPEEMEALSHRDSRLLL.

2 consecutive CARD domains span residues 1–82 and 107–178; these read MCSQ…AVQE and LQSH…HVQK. The ATG16L1-binding motif signature appears at 36–50; it reads WEVLSWEDYEGLRLV. Thr212, Tyr225, Thr226, Gly275, Ser276, Gly277, Lys278, Ser279, and Thr280 together coordinate ADP. A required for CARD9 binding region spans residues 214-247; sequence DGAENLCLEDIYTENTLEVRTEVGMAGPLHKSPA. The NACHT domain occupies 266-402; it reads DTVLVVGEAG…RKVLTSRPDA (137 aa). 272–279 contributes to the ATP binding site; that stretch reads GEAGSGKS. The S-palmitoyl cysteine moiety is linked to residue Cys368. His576 provides a ligand contact to ADP. 9 LRR repeats span residues 764 to 785, 789 to 812, 817 to 838, 845 to 857, 873 to 893, 901 to 922, 929 to 949, 957 to 978, and 985 to 1005; these read RPVA…QLLP, ACKA…IEHA, QLQK…SVAQ, NFLA…NHIT, SLQF…QALA, SLKW…ALAS, ALEE…CSLA, SLKV…ALLQ, and TILE…EALS.

The protein belongs to the NOD1-NOD2 family. Homooligomer: homooligomerizes following muramyl dipeptide (MDP)-binding, promoting RIPK2 recruitment. Interacts (via CARD domain) with RIPK2 (via CARD domain). Following RIPK2 recruitment, RIPK2 homooligomerizes via its CARD domain and forms long filaments named RIPosomes. Interacts (via CARD domain) with ubiquitin; inhibiting interaction with RIPK2. Component of a signaling complex consisting of ARHGEF2, NOD2 and RIPK2. Interacts with ANKRD17 (via N-terminus). Interacts with HSPA1A; the interaction enhances NOD2 stability. Interacts (via both CARD domains) with HSP90; the interaction enhances NOD2 stability. Interacts (via CARD domain) with SOCS3; the interaction promotes NOD2 degradation. Interacts (via CARD domain) with ERBIN; the interaction inhibits activation of NOD2. Interacts with MAPKBP1; the interaction is enhanced in the presence of muramyl dipeptide (MDP) and inhibits NOD2 homooligomerization and activation. Interacts with INAVA; the interaction takes place upon Pattern recognition receptor (PRR) stimulation. Interacts (via NACHT domain) with CARD9. Interacts (via CARD domain) with CASP1; this interaction leads to IL1B processing. Also interacts with CASP4. Interacts with NLRP1; this interaction is enhanced in the presence of muramyl dipeptide (MDP) and leads to increased IL1B release. Interacts with NLRP12; this interaction promotes degradation of NOD2 through the ubiquitin-proteasome pathway. Interacts with ANKHD1, C10orf67, CHMP5, DOCK7, ENTR1, KRT15, LDOC1, PPP1R12C, PPP2R3B, TRIM41 and VIM. Interacts with MAVS; interaction takes place following single-stranded RNA (ssRNA)-binding. Interacts with ATG16L1. Interacts with IRGM; promoting IRGM 'Lys-63'-linked polyubiquitination, which is required for interactions with the core autophagy factors. In terms of processing, palmitoylated by ZDHHC5; palmitoylation is required for proper recruitment to the bacterial entry site and hence for proper signaling upon cognate peptidoglycan detection. Palmitoylation promotes localization to the cell membrane. Palmitoylation protects from SQSTM1/p62-dependent autophagic degradation. Post-translationally, polyubiquitinated by TRIM27, leading to proteasome-mediated degradation. Polyubiquitinated and degraded following muramyl dipeptide (MDP) stimulation, conferring MDP tolerance and preventing septic shock. Degraded via selective autophagy following interaction with IRGM. IRGM promotes NOD2-RIPK2 RIPosome recruitment to autophagosome membranes, promoting their SQSTM1/p62-dependent autophagic degradation. In terms of processing, O-glycosylated by OGT, O-GlcNAcylation increases protein stability.

The protein localises to the cell membrane. Its subcellular location is the basolateral cell membrane. The protein resides in the cytoplasm. It localises to the mitochondrion. With respect to regulation, ADP-binding promotes an inactive closed conformation. Functionally, pattern recognition receptor (PRR) that detects bacterial peptidoglycan fragments and other danger signals and plays an important role in gastrointestinal immunity. Specifically activated by muramyl dipeptide (MDP), a fragment of bacterial peptidoglycan found in every bacterial peptidoglycan type. NOD2 specifically recognizes and binds 6-O-phospho-MDP, the phosphorylated form of MDP, which is generated by NAGK. 6-O-phospho-MDP-binding triggers oligomerization that facilitates the binding and subsequent activation of the proximal adapter receptor-interacting RIPK2. Following recruitment, RIPK2 undergoes 'Met-1'- (linear) and 'Lys-63'-linked polyubiquitination by E3 ubiquitin-protein ligases XIAP, BIRC2, BIRC3 and the LUBAC complex, becoming a scaffolding protein for downstream effectors, triggering activation of the NF-kappa-B and MAP kinases signaling. This in turn leads to the transcriptional activation of hundreds of genes involved in immune response. Its ability to detect bacterial MDP plays a central role in maintaining the equilibrium between intestinal microbiota and host immune responses to control inflammation. An imbalance in this relationship results in dysbiosis, whereby pathogenic bacteria prevail on commensals, causing damage in the intestinal epithelial barrier as well as allowing bacterial invasion and inflammation. Acts as a regulator of appetite by sensing MDP in a subset of brain neurons: microbiota-derived MDP reach the brain, where they bind and activate NOD2 in inhibitory hypothalamic neurons, decreasing neuronal activity, thereby regulating satiety and body temperature. NOD2-dependent MDP-sensing of bacterial cell walls in the intestinal epithelial compartment contributes to sustained postnatal growth upon undernutrition. Also plays a role in antiviral response by acting as a sensor of single-stranded RNA (ssRNA) from viruses: upon ssRNA-binding, interacts with MAVS, leading to activation of interferon regulatory factor-3/IRF3 and expression of type I interferon. Also acts as a regulator of autophagy in dendritic cells via its interaction with ATG16L1, possibly by recruiting ATG16L1 at the site of bacterial entry. NOD2 activation in the small intestine crypt also contributes to intestinal stem cells survival and function: acts by promoting mitophagy via its association with ATG16L1. In addition to its main role in innate immunity, also regulates the adaptive immune system by acting as regulator of helper T-cell and regulatory T-cells (Tregs). Besides recognizing pathogens, also involved in the endoplasmic reticulum stress response: acts by sensing and binding to the cytosolic metabolite sphingosine-1-phosphate generated in response to endoplasmic reticulum stress, initiating an inflammation process that leads to activation of the NF-kappa-B and MAP kinases signaling. May also be involved in NLRP1 activation following activation by MDP, leading to CASP1 activation and IL1B release in macrophages. This chain is Nucleotide-binding oligomerization domain-containing protein 2, found in Oryctolagus cuniculus (Rabbit).